The sequence spans 298 residues: Mitochondrial dicarboxylate/tricarboxylate transporter DTC (298 aa).

3 Solcar repeats span residues 12-93 (WTTV…LTAK), 103-194 (LPLY…SAEY), and 202-292 (GEMS…ITKF). The next 6 helical transmembrane spans lie at 18-38 (FVNGGASGMLATCVIQPIDMI), 68-88 (GLSAGLLRQATYTTARLGSFK), 109-129 (ALCGLTAGAIGACVGSPADLA), 169-189 (GCGPTVVRAMALNMGMLASYD), 208-228 (VGASAVSGFCAAACSLPFDFV), and 268-288 (FPVYCVRIAPHVMMTWIFLNQ).

Belongs to the mitochondrial carrier (TC 2.A.29) family. Highly expressed in flower buds and at lower levels in roots, leaves and stems.

The protein localises to the mitochondrion inner membrane. Its function is as follows. Catalyzes the transport of dicarboxylates, such as oxoglutarate, oxaloacetate, malate, and succinate, and of tricarboxylates, such as citrate, isocitrate, cis-aconitate, and trans-aconitate by a counter-exchange mechanism across the inner mitochondrial membrane. Substrate preference in reconstituted proteoliposomes is oxaloacetate &gt; malonate &gt; malate &gt; maleate &gt; succinate &gt; oxoglutarate &gt; citrate &gt; trans-aconitate &gt; cis-aconitate &gt; sulfate &gt; isocitrate. May be important for plant metabolic functions requiring organic acid flux to or from the mitochondria, such as nitrogen assimilation, export of reducing equivalents from the mitochondria, and fatty acid elongation. The polypeptide is Mitochondrial dicarboxylate/tricarboxylate transporter DTC (DTC) (Arabidopsis thaliana (Mouse-ear cress)).